The following is a 477-amino-acid chain: Bifunctional protein HldE (477 aa).

The interval 1 to 318 (MKVTLPDFRR…ENAIRGRADT (318 aa)) is ribokinase. ATP is bound at residue 195–198 (NLSE). Aspartate 264 is a catalytic residue. The cytidylyltransferase stretch occupies residues 344–477 (MTNGVFDILH…INIIRQGQND (134 aa)).

This sequence in the N-terminal section; belongs to the carbohydrate kinase PfkB family. In the C-terminal section; belongs to the cytidylyltransferase family. In terms of assembly, homodimer.

The catalysed reaction is D-glycero-beta-D-manno-heptose 7-phosphate + ATP = D-glycero-beta-D-manno-heptose 1,7-bisphosphate + ADP + H(+). The enzyme catalyses D-glycero-beta-D-manno-heptose 1-phosphate + ATP + H(+) = ADP-D-glycero-beta-D-manno-heptose + diphosphate. It functions in the pathway nucleotide-sugar biosynthesis; ADP-L-glycero-beta-D-manno-heptose biosynthesis; ADP-L-glycero-beta-D-manno-heptose from D-glycero-beta-D-manno-heptose 7-phosphate: step 1/4. Its pathway is nucleotide-sugar biosynthesis; ADP-L-glycero-beta-D-manno-heptose biosynthesis; ADP-L-glycero-beta-D-manno-heptose from D-glycero-beta-D-manno-heptose 7-phosphate: step 3/4. Catalyzes the phosphorylation of D-glycero-D-manno-heptose 7-phosphate at the C-1 position to selectively form D-glycero-beta-D-manno-heptose-1,7-bisphosphate. Its function is as follows. Catalyzes the ADP transfer from ATP to D-glycero-beta-D-manno-heptose 1-phosphate, yielding ADP-D-glycero-beta-D-manno-heptose. This is Bifunctional protein HldE from Edwardsiella ictaluri (strain 93-146).